The primary structure comprises 420 residues: Dynein axonemal assembly factor 4 (420 aa).

Residues 3–87 (LQVSDYSWQQ…KEAAMWETLS (85 aa)) form the CS domain. Positions 7–103 (DYSWQQTKTA…EMMQRIREKS (97 aa)) are mediates interaction with ESR1 and STUB1. 3 TPR repeats span residues 290-323 (PEWLKDKGNKLFATENYLAAINAYNLAIRLNNKM), 324-357 (PLLYLNRAACHLKLKNLHKAIEDSSKALELLMPP), and 366-399 (MKAHVRRGTAFCQLELYVEGLQDYEAALKIDPSN).

In terms of assembly, interacts with ZMYND10. Interacts with STUB1. Interacts with ESR1 and ESR2. Interacts with DNAAF2. Interacts with CCT3, CCT4, CCT5 and CCT8. Interacts with DNAAF6/PIH1D3.

The protein resides in the nucleus. It is found in the cytoplasm. Its subcellular location is the cell projection. It localises to the neuron projection. The protein localises to the dynein axonemal particle. Its function is as follows. Involved in neuronal migration during development of the cerebral neocortex. May regulate the stability and proteasomal degradation of the estrogen receptors that play an important role in neuronal differentiation, survival and plasticity. Axonemal dynein assembly factor required for ciliary motility. In Pan troglodytes (Chimpanzee), this protein is Dynein axonemal assembly factor 4.